We begin with the raw amino-acid sequence, 321 residues long: Ferrochelatase (321 aa).

Fe cation is bound by residues His194 and Glu275.

The protein belongs to the ferrochelatase family.

Its subcellular location is the cytoplasm. The catalysed reaction is heme b + 2 H(+) = protoporphyrin IX + Fe(2+). It functions in the pathway porphyrin-containing compound metabolism; protoheme biosynthesis; protoheme from protoporphyrin-IX: step 1/1. Catalyzes the ferrous insertion into protoporphyrin IX. This chain is Ferrochelatase, found in Wigglesworthia glossinidia brevipalpis.